The following is a 299-amino-acid chain: Methionyl-tRNA formyltransferase (299 aa).

109–112 (SLLP) serves as a coordination point for (6S)-5,6,7,8-tetrahydrofolate.

This sequence belongs to the Fmt family.

The enzyme catalyses L-methionyl-tRNA(fMet) + (6R)-10-formyltetrahydrofolate = N-formyl-L-methionyl-tRNA(fMet) + (6S)-5,6,7,8-tetrahydrofolate + H(+). Functionally, attaches a formyl group to the free amino group of methionyl-tRNA(fMet). The formyl group appears to play a dual role in the initiator identity of N-formylmethionyl-tRNA by promoting its recognition by IF2 and preventing the misappropriation of this tRNA by the elongation apparatus. This is Methionyl-tRNA formyltransferase from Dinoroseobacter shibae (strain DSM 16493 / NCIMB 14021 / DFL 12).